Here is a 134-residue protein sequence, read N- to C-terminus: ATP synthase epsilon chain, chloroplastic (134 aa).

This sequence belongs to the ATPase epsilon chain family. F-type ATPases have 2 components, CF(1) - the catalytic core - and CF(0) - the membrane proton channel. CF(1) has five subunits: alpha(3), beta(3), gamma(1), delta(1), epsilon(1). CF(0) has three main subunits: a, b and c.

The protein resides in the plastid. The protein localises to the chloroplast thylakoid membrane. In terms of biological role, produces ATP from ADP in the presence of a proton gradient across the membrane. The polypeptide is ATP synthase epsilon chain, chloroplastic (Spinacia oleracea (Spinach)).